We begin with the raw amino-acid sequence, 148 residues long: UPF0756 membrane protein ESA_02180 (148 aa).

Helical transmembrane passes span Ile4 to Val24, Val51 to Leu71, Leu86 to Met106, and Ile112 to Val132.

It belongs to the UPF0756 family.

The protein localises to the cell membrane. The sequence is that of UPF0756 membrane protein ESA_02180 from Cronobacter sakazakii (strain ATCC BAA-894) (Enterobacter sakazakii).